The sequence spans 377 residues: Chaperone protein DnaJ (377 aa).

The region spanning 5–70 (DYYEVLGLQK…QKRAAYDQYG (66 aa)) is the J domain. A CR-type zinc finger spans residues 134–212 (GCKKDIRLST…CHGDGRVQKA (79 aa)). Zn(2+)-binding residues include Cys147, Cys150, Cys164, Cys167, Cys186, Cys189, Cys200, and Cys203. CXXCXGXG motif repeat units follow at residues 147–154 (CDNCHGTG), 164–171 (CPHCHGAG), 186–193 (CPSCHGTG), and 200–207 (CHSCHGDG).

Belongs to the DnaJ family. As to quaternary structure, homodimer. Requires Zn(2+) as cofactor.

The protein localises to the cytoplasm. In terms of biological role, participates actively in the response to hyperosmotic and heat shock by preventing the aggregation of stress-denatured proteins and by disaggregating proteins, also in an autonomous, DnaK-independent fashion. Unfolded proteins bind initially to DnaJ; upon interaction with the DnaJ-bound protein, DnaK hydrolyzes its bound ATP, resulting in the formation of a stable complex. GrpE releases ADP from DnaK; ATP binding to DnaK triggers the release of the substrate protein, thus completing the reaction cycle. Several rounds of ATP-dependent interactions between DnaJ, DnaK and GrpE are required for fully efficient folding. Also involved, together with DnaK and GrpE, in the DNA replication of plasmids through activation of initiation proteins. This is Chaperone protein DnaJ from Haemophilus ducreyi (strain 35000HP / ATCC 700724).